Consider the following 106-residue polypeptide: Iron-sulfur cluster assembly protein CyaY (106 aa).

It belongs to the frataxin family.

Its function is as follows. Involved in iron-sulfur (Fe-S) cluster assembly. May act as a regulator of Fe-S biogenesis. The polypeptide is Iron-sulfur cluster assembly protein CyaY (Klebsiella pneumoniae subsp. pneumoniae (strain ATCC 700721 / MGH 78578)).